The sequence spans 524 residues: Pentatricopeptide repeat-containing protein At1g02150 (524 aa).

7 PPR repeats span residues 168–202, 203–237, 238–268, 274–304, 309–339, 344–378, and 379–413; these read DRRVYGSLLNAYVRAKSREKAEALLNTMRDKGYAL, HPLPFNVMMTLYMNLREYDKVDAMVFEMKQKDIRL, DIYSYNIWLSSCGSLGSVEKMELVYQQMKSD, NWTTFSTMATMYIKMGETEKAEDALRKVEAR, NRIPYHYLLSLYGSLGNKKELYRVWHVYKSV, PNLGYHALVSSLVRMGDIEGAEKVYEEWLPVKSSY, and DPRIPNLLMNAYVKNDQLETAEGLFDHMVEMGGKP.

The protein belongs to the PPR family. P subfamily.

The sequence is that of Pentatricopeptide repeat-containing protein At1g02150 from Arabidopsis thaliana (Mouse-ear cress).